The sequence spans 406 residues: ATP-dependent RNA helicase eIF4A (406 aa).

Positions 25–53 match the Q motif motif; that stretch reads DSFDAMDLKPELLRGVYAYGFERPSAIQQ. The Helicase ATP-binding domain occupies 56 to 226; the sequence is ILPIIKGNDV…TKFMRDPVRI (171 aa). 69-76 is a binding site for ATP; it reads AQSGTGKT. The DEAD box signature appears at 174–177; sequence DEAD. In terms of domain architecture, Helicase C-terminal spans 237 to 398; that stretch reads GIKQFYIAVE…EMPMNVAGKF (162 aa).

This sequence belongs to the DEAD box helicase family. eIF4A subfamily. As to quaternary structure, component of the eIF4F complex, which composition varies with external and internal environmental conditions. It is composed of at least eIF4A, eIF4E and eIF4G.

Its subcellular location is the cytoplasm. The enzyme catalyses ATP + H2O = ADP + phosphate + H(+). ATP-dependent RNA helicase which is a subunit of the eIF4F complex involved in cap recognition and is required for mRNA binding to ribosome. In the current model of translation initiation, eIF4A unwinds RNA secondary structures in the 5'-UTR of mRNAs which is necessary to allow efficient binding of the small ribosomal subunit, and subsequent scanning for the initiator codon. This is ATP-dependent RNA helicase eIF4A (tif1) from Aspergillus fumigatus (strain ATCC MYA-4609 / CBS 101355 / FGSC A1100 / Af293) (Neosartorya fumigata).